The sequence spans 108 residues: UPF0102 protein SO_0299 (108 aa).

The protein belongs to the UPF0102 family.

The sequence is that of UPF0102 protein SO_0299 from Shewanella oneidensis (strain ATCC 700550 / JCM 31522 / CIP 106686 / LMG 19005 / NCIMB 14063 / MR-1).